A 2176-amino-acid polypeptide reads, in one-letter code: Nipped-B-like protein scc-2 (2176 aa).

The segment covering 1–25 has biased composition (polar residues); it reads MDPNNLQNSLNGTGNPNFQPVQTNA. Disordered regions lie at residues 1-27, 150-170, 464-483, 495-514, 523-551, 585-615, and 669-708; these read MDPN…NAGG, PIPQ…QIQS, SEAT…DEEG, MMSV…NQRK, YDSL…DDED, QHFF…IESR, and DSLD…EMDE. Over residues 464–473 the composition is skewed to low complexity; the sequence is SEATQSSSVT. Basic and acidic residues-rich tracts occupy residues 597-615 and 685-695; these read EDRI…IESR and SGGDHHHKGDE. Over residues 696 to 708 the composition is skewed to acidic residues; sequence NSDESDEEEEMDE. HEAT repeat units follow at residues 1280–1312, 1320–1351, 1353–1388, 1393–1426, 1692–1723, 1803–1834, and 1840–1871; these read DTYL…IIEA, EDVQ…FVLY, EEYV…ICEK, EMIP…LWFQ, EKVF…FCAQ, QKYW…TLNQ, and GASI…IDSK. Residues 2149–2176 form a disordered region; sequence ITAANDDYDEEEDGGEDSRGPIMEQMEH. Residues 2154 to 2163 show a composition bias toward acidic residues; it reads DDYDEEEDGG.

This sequence belongs to the SCC2/Nipped-B family. As to quaternary structure, may heterodimerize with mau-2/SCC4 to form the cohesin loading complex.

The protein resides in the nucleus. It is found in the chromosome. In terms of biological role, plays an important role in the loading of the cohesin complex on to meiotic chromosomes. Forms a heterodimeric complex (also known as cohesin loading complex) with mau-2/SCC4 which mediates the loading of the cohesin complex onto chromatin. Plays an essential role in cell division during embryonic development. Promotes normal chromosome organization during meiosis. Required for the assembly of the synaptonemal complex between homologous chromosomes to promote sister chromatid cohesion during meiosis. Required for chromosome segregation during mitosis and meiosis. Plays a role in DNA double-strand break (DSB) repair during meiotic recombination and promotes the assembly of the 9-1-1 cell-cycle checkpoint response complex which is required for inducing apoptosis in response to DNA damage, at DNA damage sites. This is Nipped-B-like protein scc-2 from Caenorhabditis elegans.